A 290-amino-acid polypeptide reads, in one-letter code: ATP synthase gamma chain (290 aa).

This sequence belongs to the ATPase gamma chain family. F-type ATPases have 2 components, CF(1) - the catalytic core - and CF(0) - the membrane proton channel. CF(1) has five subunits: alpha(3), beta(3), gamma(1), delta(1), epsilon(1). CF(0) has three main subunits: a, b and c.

Its subcellular location is the cell inner membrane. Its function is as follows. Produces ATP from ADP in the presence of a proton gradient across the membrane. The gamma chain is believed to be important in regulating ATPase activity and the flow of protons through the CF(0) complex. The sequence is that of ATP synthase gamma chain from Bacteroides fragilis (strain YCH46).